Reading from the N-terminus, the 106-residue chain is uncharacterized protein (106 aa).

This is an uncharacterized protein from Pseudanabaena tenuis (strain PCC 7409).